Consider the following 202-residue polypeptide: Nudix hydrolase 13, mitochondrial (202 aa).

In terms of domain architecture, Nudix hydrolase spans 18–167; that stretch reads NFRLVSGCIP…WMQSALEEFL (150 aa). The Nudix box motif lies at 65-86; the sequence is GGWEDDETVLEAASREAMEEAG. Residues E80 and E84 each contribute to the Mg(2+) site.

It belongs to the Nudix hydrolase family. In terms of assembly, monomer. The cofactor is Mg(2+). As to expression, expressed in roots, leaves, stems and inflorescences.

Its subcellular location is the mitochondrion. With respect to regulation, inhibited by fluoride. Functionally, mediates the hydrolysis of some nucleoside diphosphate derivatives. Can use diadenosine 5',5'''-P(1)P(6) hexaphosphate (Ap(6)A), diadenosine 5',5'''-P(1)P(5) pentaphosphate (Ap(5)A) and adenosine tetraphosphate (p(4)A) as substrates, but not diadenosine 5',5'''-P(1)P(4) tetraphosphate (Ap(4)A), diadenosine 5',5'''-P(1)P(3) triphosphate (Ap(3)A), deoxyribonucleoside triphosphates, ribonucleoside triphosphates, diphosphoinositol pentakisphosphate (PP-InsP(5)) and 5-phospho-alpha-D-ribosyl diphosphate (PRPP). This is Nudix hydrolase 13, mitochondrial (NUDT13) from Arabidopsis thaliana (Mouse-ear cress).